We begin with the raw amino-acid sequence, 3601 residues long: Protein SPIRRIG (3601 aa).

Disordered regions lie at residues 17–50, 398–426, 449–476, 638–657, 1954–1993, 2009–2049, and 2715–2747; these read AQSS…PSSS, SSNH…ADFS, PAEP…TSSV, QYSG…SFRK, HIND…SLGS, ENIL…DFQD, and TTHV…EKEL. The segment covering 32-50 has biased composition (low complexity); that stretch reads PPSSSSSSSSPSFTYPSSS. 2 stretches are compositionally biased toward polar residues: residues 416 to 426 and 458 to 476; these read NTNSTENADFS and SRSS…TSSV. The span at 1974-1991 shows a compositional bias: polar residues; sequence STKTSISVGSFPQGQVSL. The span at 2027–2048 shows a compositional bias: basic and acidic residues; sequence EDVKKQDDHHVGPSASSERDFQ. Polar residues predominate over residues 2715–2731; it reads TTHVKSETGSPRHSSSA. The span at 2732-2747 shows a compositional bias: basic and acidic residues; it reads KMDETNGREEKSEKEL. Residues 2760–2927 enclose the BEACH-type PH domain; it reads EHLEKIRFRY…EREEVFKNLV (168 aa). Positions 2952 to 3244 constitute a BEACH domain; it reads GGRLFKLMAK…QLFPKAHVKR (293 aa). 4 WD repeats span residues 3328–3367, 3378–3417, 3464–3507, and 3540–3579; these read HESN…PRGS, AHTA…FVRQ, PSDS…DPVS, and FHKQ…LRAS.

In terms of assembly, interacts with DCP1. Expressed in flowers, leaves, stems, hypocotyls and roots.

Its subcellular location is the cytoplasm. It is found in the P-body. Involved in cell morphogenesis. May have a function in membrane fusion or membrane composition. Required for salt stress tolerance. Regulates the salt stress-dependent post-transcriptional stabilization, cytoplasmic agglomeration, and localization to P-bodies of a subset of salt stress-regulated mRNAs. The sequence is that of Protein SPIRRIG from Arabidopsis thaliana (Mouse-ear cress).